The following is a 215-amino-acid chain: Cytochrome b6 (215 aa).

The chain crosses the membrane as a helical span at residues 32–52; it reads IFYCLGGITLTCFLVQVATGF. Cys35 provides a ligand contact to heme c. Heme b-binding residues include His86 and His100. Helical transmembrane passes span 90–110, 116–136, and 186–206; these read ASMM…TGGF, LTWV…VTGY, and LHTF…FPMI. Heme b-binding residues include His187 and His202.

It belongs to the cytochrome b family. PetB subfamily. The 4 large subunits of the cytochrome b6-f complex are cytochrome b6, subunit IV (17 kDa polypeptide, PetD), cytochrome f and the Rieske protein, while the 4 small subunits are PetG, PetL, PetM and PetN. The complex functions as a dimer. It depends on heme b as a cofactor. Requires heme c as cofactor.

It localises to the plastid. The protein resides in the chloroplast thylakoid membrane. Its function is as follows. Component of the cytochrome b6-f complex, which mediates electron transfer between photosystem II (PSII) and photosystem I (PSI), cyclic electron flow around PSI, and state transitions. The chain is Cytochrome b6 from Nicotiana tomentosiformis (Tobacco).